A 368-amino-acid chain; its full sequence is UDP-galactose/UDP-N-acetylglucosamine transporter srf-3 (368 aa).

Transmembrane regions (helical) follow at residues 72 to 92, 118 to 138, 145 to 165, 174 to 194, 203 to 223, 235 to 254, 273 to 293, and 317 to 337; these read FVST…CLFL, LKVC…YVAA, TFMI…VIIL, WFAL…GTKA, FVGF…GIYF, LWMR…FSAI, SIVW…AVCI, and IFLF…LVIF.

The protein belongs to the nucleotide-sugar transporter family. SLC35A subfamily. Expressed exclusively in pharyngeal cells g1 and g2, lateral seam cells, spermatheca and vas deferens.

It localises to the golgi apparatus membrane. In terms of biological role, acts as a transporter of both UDP-galactose and UDP-N-acetylglucosamine into the Golgi lumen. Apparently transports UDP-galactose and UDP-N-acetylglucosamine simultaneously, and independently, by an unknown mechanism. Functions redundantly with nucleotide sugar transporter nstp-4. May be involved in gonadal development. This chain is UDP-galactose/UDP-N-acetylglucosamine transporter srf-3 (srf-3), found in Caenorhabditis elegans.